The chain runs to 403 residues: Homoserine O-succinyltransferase (403 aa).

The AB hydrolase-1 domain occupies 58–366; sequence NAVLICHALS…ESNHGHDAFL (309 aa). Catalysis depends on Ser-164, which acts as the Nucleophile. Arg-234 provides a ligand contact to substrate. Active-site residues include Asp-329 and His-362. Asp-363 serves as a coordination point for substrate.

It belongs to the AB hydrolase superfamily. MetX family. As to quaternary structure, homodimer.

It is found in the cytoplasm. It carries out the reaction L-homoserine + succinyl-CoA = O-succinyl-L-homoserine + CoA. The protein operates within amino-acid biosynthesis; L-methionine biosynthesis via de novo pathway; O-succinyl-L-homoserine from L-homoserine: step 1/1. In terms of biological role, transfers a succinyl group from succinyl-CoA to L-homoserine, forming succinyl-L-homoserine. In Halothiobacillus neapolitanus (strain ATCC 23641 / c2) (Thiobacillus neapolitanus), this protein is Homoserine O-succinyltransferase.